The following is a 254-amino-acid chain: tRNA (guanine-N(1)-)-methyltransferase (254 aa).

Residues Gly-114 and 134–139 (IGDYVL) contribute to the S-adenosyl-L-methionine site.

It belongs to the RNA methyltransferase TrmD family. As to quaternary structure, homodimer.

The protein localises to the cytoplasm. The catalysed reaction is guanosine(37) in tRNA + S-adenosyl-L-methionine = N(1)-methylguanosine(37) in tRNA + S-adenosyl-L-homocysteine + H(+). In terms of biological role, specifically methylates guanosine-37 in various tRNAs. This is tRNA (guanine-N(1)-)-methyltransferase from Desulforamulus reducens (strain ATCC BAA-1160 / DSM 100696 / MI-1) (Desulfotomaculum reducens).